We begin with the raw amino-acid sequence, 68 residues long: Large ribosomal subunit protein bL35 (68 aa).

This sequence belongs to the bacterial ribosomal protein bL35 family.

The protein is Large ribosomal subunit protein bL35 of Rickettsia conorii (strain ATCC VR-613 / Malish 7).